Here is a 436-residue protein sequence, read N- to C-terminus: Serine--tRNA ligase (436 aa).

Positions 43–55 are enriched in basic and acidic residues; that stretch reads TKSEQLKQKRNEV. The disordered stretch occupies residues 43–69; that stretch reads TKSEQLKQKRNEVSDQIAQAKRNKEDA. L-serine is bound at residue 237-239; it reads TAE. 268-270 is a binding site for ATP; that stretch reads RSE. An L-serine-binding site is contributed by E291. 355-358 is a binding site for ATP; the sequence is EISS. Residue S390 participates in L-serine binding.

This sequence belongs to the class-II aminoacyl-tRNA synthetase family. Type-1 seryl-tRNA synthetase subfamily. In terms of assembly, homodimer. The tRNA molecule binds across the dimer.

Its subcellular location is the cytoplasm. It catalyses the reaction tRNA(Ser) + L-serine + ATP = L-seryl-tRNA(Ser) + AMP + diphosphate + H(+). It carries out the reaction tRNA(Sec) + L-serine + ATP = L-seryl-tRNA(Sec) + AMP + diphosphate + H(+). It participates in aminoacyl-tRNA biosynthesis; selenocysteinyl-tRNA(Sec) biosynthesis; L-seryl-tRNA(Sec) from L-serine and tRNA(Sec): step 1/1. Functionally, catalyzes the attachment of serine to tRNA(Ser). Is also able to aminoacylate tRNA(Sec) with serine, to form the misacylated tRNA L-seryl-tRNA(Sec), which will be further converted into selenocysteinyl-tRNA(Sec). This is Serine--tRNA ligase from Lactobacillus gasseri (strain ATCC 33323 / DSM 20243 / BCRC 14619 / CIP 102991 / JCM 1131 / KCTC 3163 / NCIMB 11718 / NCTC 13722 / AM63).